The sequence spans 409 residues: E3 ubiquitin-protein ligase MARCHF4 (409 aa).

An N-terminal signal peptide occupies residues 1–17 (MLMPLGGLLWWWCCCCG). Residues 92-133 (GPREAVGRETPPLPPPPPLPPSGDDDWDGPATGPPASLLSSA) form a disordered region. A compositionally biased stretch (pro residues) spans 102–112 (PPLPPPPPLPP). The RING-CH-type zinc-finger motif lies at 154-214 (DSGMRTPLCR…ELCYYKYHVI (61 aa)). Cys-162, Cys-165, Cys-178, Cys-180, His-188, Cys-191, Cys-204, and Cys-207 together coordinate Zn(2+). The next 2 membrane-spanning stretches (helical) occupy residues 242 to 262 (LGSL…FSPS) and 271 to 291 (LFQI…GLII). Disordered regions lie at residues 323–372 (EDQK…GPVS) and 389–409 (PHDQ…VTTV). Residues 328–343 (GGRTNLQTSSSAQANL) show a composition bias toward polar residues.

Its subcellular location is the golgi apparatus membrane. It carries out the reaction S-ubiquitinyl-[E2 ubiquitin-conjugating enzyme]-L-cysteine + [acceptor protein]-L-lysine = [E2 ubiquitin-conjugating enzyme]-L-cysteine + N(6)-ubiquitinyl-[acceptor protein]-L-lysine.. It participates in protein modification; protein ubiquitination. E3 ubiquitin-protein ligase that may mediate ubiquitination of MHC-I and CD4, and promote their subsequent endocytosis and sorting to lysosomes via multivesicular bodies. E3 ubiquitin ligases accept ubiquitin from an E2 ubiquitin-conjugating enzyme in the form of a thioester and then directly transfer the ubiquitin to targeted substrates. This Mus musculus (Mouse) protein is E3 ubiquitin-protein ligase MARCHF4 (Marchf4).